The chain runs to 126 residues: Fumarate reductase subunit C (126 aa).

The next 3 helical transmembrane spans lie at Ile-30–Gly-50, Val-64–Phe-84, and Val-105–Leu-125.

This sequence belongs to the FrdC family. Part of an enzyme complex containing four subunits: a flavoprotein (FrdA), an iron-sulfur protein (FrdB), and two hydrophobic anchor proteins (FrdC and FrdD).

The protein localises to the cell membrane. Anchors the catalytic components of the fumarate reductase complex to the cell membrane, binds quinones. This Mycobacterium tuberculosis (strain CDC 1551 / Oshkosh) protein is Fumarate reductase subunit C.